Consider the following 862-residue polypeptide: Valine--tRNA ligase (862 aa).

Positions 47-57 match the 'HIGH' region motif; that stretch reads PTASGSLHIGH. A disordered region spans residues 110 to 130; it reads EPGLTPPFEGGDNKSSKAADQ. A compositionally biased stretch (basic and acidic residues) spans 120–129; that stretch reads GDNKSSKAAD. A 'KMSKS' region motif is present at residues 584 to 588; the sequence is KMSKS. Lysine 587 provides a ligand contact to ATP.

It belongs to the class-I aminoacyl-tRNA synthetase family. ValS type 2 subfamily. Monomer.

It is found in the cytoplasm. The catalysed reaction is tRNA(Val) + L-valine + ATP = L-valyl-tRNA(Val) + AMP + diphosphate. Functionally, catalyzes the attachment of valine to tRNA(Val). As ValRS can inadvertently accommodate and process structurally similar amino acids such as threonine, to avoid such errors, it has a 'posttransfer' editing activity that hydrolyzes mischarged Thr-tRNA(Val) in a tRNA-dependent manner. The chain is Valine--tRNA ligase from Leifsonia xyli subsp. xyli (strain CTCB07).